The primary structure comprises 557 residues: Formate--tetrahydrofolate ligase (557 aa).

ATP is bound at residue 66–73; it reads TPAGEGKT.

The protein belongs to the formate--tetrahydrofolate ligase family.

The catalysed reaction is (6S)-5,6,7,8-tetrahydrofolate + formate + ATP = (6R)-10-formyltetrahydrofolate + ADP + phosphate. It participates in one-carbon metabolism; tetrahydrofolate interconversion. The chain is Formate--tetrahydrofolate ligase from Bartonella tribocorum (strain CIP 105476 / IBS 506).